The primary structure comprises 272 residues: Leucoagglutinating phytohemagglutinin (272 aa).

Positions 1–20 are cleaved as a signal peptide; it reads MASSKFFTVLFLVLLTHANS. Asparagine 32 carries an N-linked (GlcNAc...) (high mannose) asparagine glycan. Asparagine 80 carries N-linked (GlcNAc...) (complex) asparagine glycosylation.

The protein belongs to the leguminous lectin family. As to quaternary structure, homotetramer. In terms of processing, N-glycosylated on Asn-80; contains xylose.

Functionally, this insecticidal carbohydrate-binding lectin is toxic for the cowpea weevil. This Phaseolus vulgaris (Kidney bean) protein is Leucoagglutinating phytohemagglutinin (DLEC2).